A 521-amino-acid polypeptide reads, in one-letter code: RING-type E3 ubiquitin-protein ligase PPIL2 (521 aa).

In terms of domain architecture, U-box spans 35–108 (RRLPFDHCSL…GQYHCPVLYS (74 aa)). Residues 197 to 217 (LKNTNSETRETLQELYKEFKG) are a coiled coil. Lys216 participates in a covalent cross-link: Glycyl lysine isopeptide (Lys-Gly) (interchain with G-Cter in SUMO2). One can recognise a PPIase cyclophilin-type domain in the interval 278–433 (KKGYVRLHTN…EEVLICTTTV (156 aa)). Residues 447–462 (QERKKTQHQVDPEAKV) show a composition bias toward basic and acidic residues. Residues 447–521 (QERKKTQHQV…SRGFGDFSSW (75 aa)) are disordered. Polar residues predominate over residues 465–478 (SQPQPGNQGPQTYR). Position 483 is an N6-acetyllysine (Lys483).

Belongs to the cyclophilin-type PPIase family. PPIL2 subfamily. As to quaternary structure, component of the minor spliceosome, which splices U12-type introns. Within this complex, interacts with PRPF8/PRP8, EFTUD2/SNU114 and PLRG1. Interacts with isoform 2 of BSG. Interacts (via the PPIase cyclophilin-type domain) with CRNKL1; they may form a trimeric complex with HSP90.

The protein resides in the nucleus. It catalyses the reaction S-ubiquitinyl-[E2 ubiquitin-conjugating enzyme]-L-cysteine + [acceptor protein]-L-lysine = [E2 ubiquitin-conjugating enzyme]-L-cysteine + N(6)-ubiquitinyl-[acceptor protein]-L-lysine.. It functions in the pathway protein modification; protein ubiquitination. Its function is as follows. Has a ubiquitin-protein ligase activity acting as an E3 ubiquitin protein ligase or as an ubiquitin-ubiquitin ligase promoting elongation of ubiquitin chains on substrates. By mediating 'Lys-48'-linked polyubiquitination of proteins could target them for proteasomal degradation. May also function as a chaperone, playing a role in transport to the cell membrane of BSG/Basigin for instance. Probable inactive PPIase with no peptidyl-prolyl cis-trans isomerase activity. As a component of the minor spliceosome, involved in the splicing of U12-type introns in pre-mRNAs. This chain is RING-type E3 ubiquitin-protein ligase PPIL2, found in Mus musculus (Mouse).